The following is a 193-amino-acid chain: dCTP deaminase (193 aa).

DCTP-binding positions include 110–115, aspartate 128, 136–138, tyrosine 171, lysine 178, and glutamine 182; these read RSSLAR and VLE. The Proton donor/acceptor role is filled by glutamate 138. Basic and acidic residues predominate over residues 170–181; it reads PYNRRQDAKYRD. Residues 170 to 193 are disordered; that stretch reads PYNRRQDAKYRDQQGAVASRIDKD.

Belongs to the dCTP deaminase family. Homotrimer.

The enzyme catalyses dCTP + H2O + H(+) = dUTP + NH4(+). The protein operates within pyrimidine metabolism; dUMP biosynthesis; dUMP from dCTP (dUTP route): step 1/2. Its function is as follows. Catalyzes the deamination of dCTP to dUTP. This chain is dCTP deaminase, found in Enterobacter sp. (strain 638).